The sequence spans 666 residues: Chaperone protein HtpG (666 aa).

The segment at 1-374 (MSELNPVDNQ…SADLPLNVSR (374 aa)) is a; substrate-binding. The segment at 375 to 593 (ELLQESRDVK…EGELSPQMIQ (219 aa)) is b. Residues 594–666 (MLKQMGQDVP…LRRVNELLMR (73 aa)) are c.

Belongs to the heat shock protein 90 family. As to quaternary structure, homodimer.

It localises to the cytoplasm. Molecular chaperone. Has ATPase activity. This Psychrobacter cryohalolentis (strain ATCC BAA-1226 / DSM 17306 / VKM B-2378 / K5) protein is Chaperone protein HtpG.